The sequence spans 629 residues: DNA topoisomerase 4 subunit B (629 aa).

Residues Tyr4, Asn41, Asp68, 109–115 (GLHGVGI), and Lys333 each bind ATP. Positions 411–524 (AELFLVEGDS…AGHVYVAMPP (114 aa)) constitute a Toprim domain. Positions 417, 489, and 491 each coordinate Mg(2+).

The protein belongs to the type II topoisomerase family. ParE type 1 subfamily. In terms of assembly, heterotetramer composed of ParC and ParE. Mg(2+) serves as cofactor. The cofactor is Mn(2+). Requires Ca(2+) as cofactor.

The enzyme catalyses ATP-dependent breakage, passage and rejoining of double-stranded DNA.. In terms of biological role, topoisomerase IV is essential for chromosome segregation. It relaxes supercoiled DNA. Performs the decatenation events required during the replication of a circular DNA molecule. The protein is DNA topoisomerase 4 subunit B of Pseudomonas aeruginosa (strain ATCC 15692 / DSM 22644 / CIP 104116 / JCM 14847 / LMG 12228 / 1C / PRS 101 / PAO1).